Here is a 173-residue protein sequence, read N- to C-terminus: Probable calcium-binding protein CML14 (173 aa).

EF-hand domains are found at residues 21-56 (SQLK…LGLR), 57-92 (PTGD…VLTT), 97-132 (VDQA…LGQP), and 133-168 (LTFE…SALD). D34, N36, D38, S40, E45, D70, N72, N74, S76, E81, D110, D112, N114, E121, D146, D148, D150, and E157 together coordinate Ca(2+).

In terms of biological role, potential calcium sensor. This chain is Probable calcium-binding protein CML14 (CML14), found in Oryza sativa subsp. japonica (Rice).